We begin with the raw amino-acid sequence, 598 residues long: Probable translation initiation factor IF-2 (598 aa).

The region spanning L3 to E223 is the tr-type G domain. The tract at residues G12–T19 is G1. G12–T19 is a binding site for GTP. A G2 region spans residues G37–H41. Residues D76 to G79 form a G3 region. Residues D76–H80 and N130–D133 contribute to the GTP site. Positions N130–D133 are G4. The interval S200–M202 is G5.

This sequence belongs to the TRAFAC class translation factor GTPase superfamily. Classic translation factor GTPase family. IF-2 subfamily.

Its function is as follows. Function in general translation initiation by promoting the binding of the formylmethionine-tRNA to ribosomes. Seems to function along with eIF-2. The sequence is that of Probable translation initiation factor IF-2 from Methanococcus aeolicus (strain ATCC BAA-1280 / DSM 17508 / OCM 812 / Nankai-3).